The following is a 181-amino-acid chain: MFVSRLAASGLLLLALLAVSLDGKPLQQWSQRWPHLEIPPLVVQNWKSPTQLQARESPAGGTTALREELSLGPEAALDTPPAGPDGGPRGSKAAAAAPQRLSKSKGASATSAASRDLRTDGKQARQNWGRLVSPDHHSAAGGGCGGGGGARRLKGLAKKRAGNGCFGLKLDRIGSMSGLGC.

The first 23 residues, 1–23 (MFVSRLAASGLLLLALLAVSLDG), serve as a signal peptide directing secretion. A propeptide spanning residues 24-27 (KPLQ) is cleaved from the precursor. 2 positions are modified to pyrrolidone carboxylic acid: Q28 and Q31. The propeptide occupies 41-43 (LVV). Residue Q44 is modified to Pyrrolidone carboxylic acid. Positions 50–52 (TQL) are excised as a propeptide. Q53 bears the Pyrrolidone carboxylic acid mark. A propeptide spanning residues 59-159 (AGGTTALREE…ARRLKGLAKK (101 aa)) is cleaved from the precursor. Positions 74 to 150 (EAALDTPPAG…GGGCGGGGGA (77 aa)) are disordered. Over residues 104 to 114 (SKGASATSAAS) the composition is skewed to low complexity. Gly residues predominate over residues 140-150 (AGGGCGGGGGA). The cysteines at positions 165 and 181 are disulfide-linked.

In the N-terminal section; belongs to the bradykinin-potentiating peptide family. The protein in the C-terminal section; belongs to the natriuretic peptide family. As to expression, venom gland.

The protein resides in the secreted. Functionally, bradykinin-potentiating peptide both inhibits the activity of the angiotensin-converting enzyme (ACE) and enhances the action of bradykinin by inhibiting the peptidases that inactivate it. It acts as an indirect hypotensive agent. Synthetic Cdt1a, Cdt1b and the short hexapeptide Cdt3 are able to potentiate the hypotensive effect mediated by Bk on the blood pressure of anesthetized rats. In terms of biological role, has a vasorelaxant activity in rat aortic strips and a diuretic potency in anesthetized rats. May act by activating natriuretic receptors (NPR1 and/or NPR2). This chain is Bradykinin potentiating and C-type natriuretic peptides, found in Crotalus durissus terrificus (South American rattlesnake).